We begin with the raw amino-acid sequence, 987 residues long: Voltage-gated delayed rectifier potassium channel KCNH1 (987 aa).

The Cytoplasmic segment spans residues 1–220 (MTMAGGRKGL…LHYCVFKTTW (220 aa)). The region spanning 14–94 (QNTFLENIVR…QTFENYEMNS (81 aa)) is the PAS domain. In terms of domain architecture, PAC spans 93–145 (NSFEILMYKKNRTPVWFFVKIAPIRNEQDKVVLFLCTFSDITAFKQPIEDDSC). The required for phosphatidylinositol bisphosphate binding stretch occupies residues 151–162 (FARLTRALTSSR). Residues 221-241 (DWIILILTFYTAILVPYNVSF) traverse the membrane as a helical segment. The Extracellular portion of the chain corresponds to 242-248 (KTRQNNV). A helical membrane pass occupies residues 249–269 (AWLVVDSIVDVIFLVDIVLNF). Over 270 to 290 (HTTFVGPAGEVISDPKLIRMN) the chain is Cytoplasmic. A helical transmembrane segment spans residues 291 to 309 (YLKTWFVIDLLSCLPYDVI). Residues 310 to 345 (NAFENVDEVSAFMGDPGKIGFADQIPPPLEGRESQG) are Extracellular-facing. Residues 346–368 (ISSLFSSLKVVRLLRLGRVARKL) traverse the membrane as a helical; Voltage-sensor segment. The Cytoplasmic segment spans residues 369–377 (DHYIEYGAA). Residues 378–399 (VLVLLVCVFGLAAHWMACIWYS) form a helical membrane-spanning segment. Residues 400–448 (IGDYEIFDEDTKTIRNNSWLYQLAMDIGTPYQFNGSGSGKWEGGPSKNS) are Extracellular-facing. N-linked (GlcNAc...) asparagine glycans are attached at residues N415 and N433. The segment at residues 449 to 470 (VYISSLYFTMTSLTSVGFGNIA) is an intramembrane region (pore-forming). Positions 463–468 (SVGFGN) match the Selectivity filter motif. The Extracellular portion of the chain corresponds to 471 to 477 (PSTDIEK). The chain crosses the membrane as a helical span at residues 478 to 498 (IFAVAIMMIGSLLYATIFGNV). The Cytoplasmic segment spans residues 499 to 987 (TTIFQQMYAN…ESERDIFGAS (489 aa)). Residues 673-770 (KRDALQKVLE…LDDLDVEKGS (98 aa)) form a calmodulin-binding region. Residues 699 to 701 (YNL) are interaction with cyclic nucleotide-binding pocket. The tract at residues 922–962 (AAVLEVKHELKEDIKALSTKMTSIEKQLSEILRILTSRRSS) is CAD (involved in subunit assembly). A disordered region spans residues 960–987 (RSSQSPQELFEISRPQSPESERDIFGAS). S972, S976, and S979 each carry phosphoserine. Residues 978–987 (ESERDIFGAS) are compositionally biased toward basic and acidic residues.

It belongs to the potassium channel family. H (Eag) (TC 1.A.1.20) subfamily. Kv10.1/KCNH1 sub-subfamily. In terms of assembly, homomultimer. The potassium channel is composed of a homo- or heterotetrameric complex of pore-forming alpha subunits that can associate with modulating beta subunits. Heteromultimer with KCNH5/EAG2. Interacts with ALG10B. Interacts with RABEP1. Interacts (via C-terminus) with CTTN. Interacts (via C-terminal cytoplasmic region) with Ca(2+)-bound calmodulin. Channel activity is regulated via tyrosine phosphorylation/dephosphorylation by SRC and PTPN6. Detected in cerebellum, cortex and retina.

The protein resides in the cell membrane. The protein localises to the nucleus inner membrane. It is found in the cell projection. Its subcellular location is the dendrite. It localises to the axon. The protein resides in the presynaptic cell membrane. The protein localises to the perikaryon. It is found in the postsynaptic density membrane. Its subcellular location is the early endosome membrane. The catalysed reaction is K(+)(in) = K(+)(out). Channel activity is inhibited by interaction with Ca(2+)-bound calmodulin. Interaction of a single pore-forming alpha subunit with a calmodulin chain is sufficient to promote channel closure. Extracellular magnesium ion concentrations up to 4 mM modulate channel activity by slowing down current activation in a reversible fashion. Channel activity is not regulated by cyclic nucleotides. Channel activity is inhibited by binding intracellular phosphatidylinositol-3,5-bisphosphate and phosphatidylinositol-4,5-bisphosphate (PIP2), but is not inhibited by phosphatidylinositol 4-phosphate. Pore-forming (alpha) subunit of a voltage-gated delayed rectifier potassium channel that mediates outward-rectifying potassium currents which, on depolarization, reaches a steady-state level and do not inactivate. The activation kinetics depend on the prepulse potential and external divalent cation concentration. With negative prepulses, the current activation is delayed and slowed down several fold, whereas more positive prepulses speed up activation. The time course of activation is biphasic with a fast and a slowly activating current component. Activates at more positive membrane potentials and exhibit a steeper activation curve. Channel properties are modulated by subunit assembly. Mediates IK(NI) current in myoblasts. Involved in the regulation of cell proliferation and differentiation, in particular adipogenic and osteogenic differentiation in bone marrow-derived mesenchymal stem cells (MSCs). The chain is Voltage-gated delayed rectifier potassium channel KCNH1 from Bos taurus (Bovine).